The sequence spans 135 residues: Small ribosomal subunit protein uS9 (135 aa).

The segment at serine 96–arginine 135 is disordered. The span at alanine 97–alanine 115 shows a compositional bias: basic and acidic residues. The span at lysine 116–arginine 135 shows a compositional bias: basic residues.

The protein belongs to the universal ribosomal protein uS9 family.

In Prochlorococcus marinus (strain MIT 9303), this protein is Small ribosomal subunit protein uS9.